Reading from the N-terminus, the 525-residue chain is DEAD-box ATP-dependent RNA helicase CshA (525 aa).

Residues 2-30 (TTFRELGLSDSLLQSVESMGFEEATPIQA) carry the Q motif motif. One can recognise a Helicase ATP-binding domain in the interval 33–203 (IPHALQGKDI…ERFMTEPQHI (171 aa)). 46–53 (AQTGTGKT) contributes to the ATP binding site. Residues 151-154 (DEAD) carry the DEAD box motif. Residues 214 to 374 (NIQQFYLEVQ…RMDAPTLDEA (161 aa)) form the Helicase C-terminal domain. A disordered region spans residues 428–525 (TTPIALTSEP…RKHHSRKPQA (98 aa)). Residues 458–503 (DGNRNRSRDGRGGDGRNRDRNRDGRNRDGNRDRNRDGGNRGRRGEG) are compositionally biased toward basic and acidic residues. Positions 515–525 (ERKHHSRKPQA) are enriched in basic residues.

It belongs to the DEAD box helicase family. CshA subfamily. As to quaternary structure, oligomerizes, may be a member of the RNA degradosome.

The protein localises to the cytoplasm. It carries out the reaction ATP + H2O = ADP + phosphate + H(+). Its function is as follows. DEAD-box RNA helicase possibly involved in RNA degradation. Unwinds dsRNA in both 5'- and 3'-directions, has RNA-dependent ATPase activity. The polypeptide is DEAD-box ATP-dependent RNA helicase CshA (Bacillus cereus (strain ATCC 10987 / NRS 248)).